We begin with the raw amino-acid sequence, 382 residues long: Alanine racemase 1 (382 aa).

Lys-39 serves as the catalytic Proton acceptor; specific for D-alanine. Residue Lys-39 is modified to N6-(pyridoxal phosphate)lysine. Residue Arg-138 participates in substrate binding. Catalysis depends on Tyr-265, which acts as the Proton acceptor; specific for L-alanine. Position 312 (Met-312) interacts with substrate.

It belongs to the alanine racemase family. Pyridoxal 5'-phosphate serves as cofactor.

It catalyses the reaction L-alanine = D-alanine. It functions in the pathway amino-acid biosynthesis; D-alanine biosynthesis; D-alanine from L-alanine: step 1/1. Functionally, catalyzes the interconversion of L-alanine and D-alanine. May also act on other amino acids. The sequence is that of Alanine racemase 1 (alr1) from Staphylococcus aureus (strain NCTC 8325 / PS 47).